Here is a 1516-residue protein sequence, read N- to C-terminus: EF-hand calcium-binding domain-containing protein 6 (1516 aa).

The segment at 1-23 (MKRNGTRLNFAKANSTKSGSTRA) is disordered. Residues 12–21 (KANSTKSGST) are compositionally biased toward polar residues. 5 consecutive EF-hand domains span residues 96–131 (SRRD…FLIP), 197–232 (RNMR…FCLR), 321–356 (KSYE…FIYR), 444–462 (SGHI…MVAK), and 528–563 (RNLQ…FCPY). Ca(2+) is bound by residues D109, N111, N113, M115, D120, D210, N212, T214, and E221. Residues 618–638 (EEPGQQDERTQPSGEKTSEIN) form a disordered region. A compositionally biased stretch (polar residues) spans 628–638 (QPSGEKTSEIN). 6 consecutive EF-hand domains span residues 674–690 (KINQ…SGMP), 763–798 (ESFR…LQLN), 905–940 (LTPR…RYSP), 1086–1121 (SSQP…VCQK), 1193–1228 (SHYH…HIQI), and 1229–1264 (LTDE…ERVP). D776, D778, D780, and D787 together coordinate Ca(2+). A Phosphothreonine modification is found at T906. The disordered stretch occupies residues 1263 to 1318 (VPSPPMAAGDSGESTMAQRGSSAPEFSQGTRSNLYSPPRDSRVGLKSRSHPCTPVG). Position 1265 is a phosphoserine (S1265). Positions 1274 to 1297 (GESTMAQRGSSAPEFSQGTRSNLY) are enriched in polar residues. S1311 carries the post-translational modification Phosphoserine. Residues T1315 and T1319 each carry the phosphothreonine modification. The tract at residues 1318–1516 (GTPPLQNCEP…YNDFLRAFLQ (199 aa)) is interaction with PARK7. 4 EF-hand domains span residues 1348–1373 (KEKD…FKLD), 1374–1409 (ISRE…LLKA), 1454–1484 (MRRS…YSIN), and 1485–1516 (LSEE…AFLQ). The tract at residues 1422–1516 (NADKMKEAGM…YNDFLRAFLQ (95 aa)) is interaction with AR. 4 residues coordinate Ca(2+): D1462, N1464, T1466, and D1473.

As to quaternary structure, microtubule inner protein component of sperm flagellar doublet microtubules. Binds PARK7. Part of a ternary complex containing PARK7, EFCAB6/DJBP and AR.

It is found in the nucleus. Its subcellular location is the cytoplasm. The protein resides in the cytoskeleton. It localises to the flagellum axoneme. Its function is as follows. Negatively regulates the androgen receptor by recruiting histone deacetylase complex, and protein DJ-1 antagonizes this inhibition by abrogation of this complex. Microtubule inner protein (MIP) part of the dynein-decorated doublet microtubules (DMTs) in cilia axoneme, which is required for motile cilia beating. The protein is EF-hand calcium-binding domain-containing protein 6 (Efcab6) of Mus musculus (Mouse).